We begin with the raw amino-acid sequence, 119 residues long: HTH-type transcriptional regulator SarX (119 aa).

Residues 55–78 constitute a DNA-binding region (H-T-H motif); that stretch reads LKTAMDELDLSRTKLLVSIRRLIE.

This sequence belongs to the SarA family.

It localises to the cytoplasm. In terms of biological role, involved in the regulation of virulence genes. Acts as a repressor of the agr locus and consequently targets genes regulated by the agr system such as sspA, hla and hlb. Binds directly to the agr promoter region. The polypeptide is HTH-type transcriptional regulator SarX (sarX) (Staphylococcus aureus (strain USA300)).